The following is a 78-amino-acid chain: Large ribosomal subunit protein uL24 (78 aa).

The tract at residues 52-78 (PSEKTPNGGHVNKEMPIDISNVAKVEG) is disordered.

It belongs to the universal ribosomal protein uL24 family. Part of the 50S ribosomal subunit.

In terms of biological role, one of two assembly initiator proteins, it binds directly to the 5'-end of the 23S rRNA, where it nucleates assembly of the 50S subunit. One of the proteins that surrounds the polypeptide exit tunnel on the outside of the subunit. In Campylobacter concisus (strain 13826), this protein is Large ribosomal subunit protein uL24.